The sequence spans 208 residues: Uracil phosphoribosyltransferase (208 aa).

5-phospho-alpha-D-ribose 1-diphosphate contacts are provided by residues Arg78, Arg103, and 130–138 (DPMLATGGS). Uracil-binding positions include Ile193 and 198–200 (GDA). Asp199 provides a ligand contact to 5-phospho-alpha-D-ribose 1-diphosphate.

The protein belongs to the UPRTase family. Mg(2+) is required as a cofactor.

The catalysed reaction is UMP + diphosphate = 5-phospho-alpha-D-ribose 1-diphosphate + uracil. It functions in the pathway pyrimidine metabolism; UMP biosynthesis via salvage pathway; UMP from uracil: step 1/1. With respect to regulation, allosterically activated by GTP. Functionally, catalyzes the conversion of uracil and 5-phospho-alpha-D-ribose 1-diphosphate (PRPP) to UMP and diphosphate. This chain is Uracil phosphoribosyltransferase, found in Aeromonas salmonicida (strain A449).